The chain runs to 282 residues: Phosphatidylserine decarboxylase proenzyme (282 aa).

Residues Asp-88, His-144, and Ser-247 each act as charge relay system; for autoendoproteolytic cleavage activity in the active site. Residue Ser-247 is the Schiff-base intermediate with substrate; via pyruvic acid; for decarboxylase activity of the active site. Ser-247 is modified (pyruvic acid (Ser); by autocatalysis).

It belongs to the phosphatidylserine decarboxylase family. PSD-B subfamily. Prokaryotic type I sub-subfamily. As to quaternary structure, heterodimer of a large membrane-associated beta subunit and a small pyruvoyl-containing alpha subunit. It depends on pyruvate as a cofactor. Is synthesized initially as an inactive proenzyme. Formation of the active enzyme involves a self-maturation process in which the active site pyruvoyl group is generated from an internal serine residue via an autocatalytic post-translational modification. Two non-identical subunits are generated from the proenzyme in this reaction, and the pyruvate is formed at the N-terminus of the alpha chain, which is derived from the carboxyl end of the proenzyme. The autoendoproteolytic cleavage occurs by a canonical serine protease mechanism, in which the side chain hydroxyl group of the serine supplies its oxygen atom to form the C-terminus of the beta chain, while the remainder of the serine residue undergoes an oxidative deamination to produce ammonia and the pyruvoyl prosthetic group on the alpha chain. During this reaction, the Ser that is part of the protease active site of the proenzyme becomes the pyruvoyl prosthetic group, which constitutes an essential element of the active site of the mature decarboxylase.

The protein localises to the cell membrane. The enzyme catalyses a 1,2-diacyl-sn-glycero-3-phospho-L-serine + H(+) = a 1,2-diacyl-sn-glycero-3-phosphoethanolamine + CO2. The protein operates within phospholipid metabolism; phosphatidylethanolamine biosynthesis; phosphatidylethanolamine from CDP-diacylglycerol: step 2/2. Its function is as follows. Catalyzes the formation of phosphatidylethanolamine (PtdEtn) from phosphatidylserine (PtdSer). This Xanthomonas oryzae pv. oryzae (strain MAFF 311018) protein is Phosphatidylserine decarboxylase proenzyme.